Here is a 62-residue protein sequence, read N- to C-terminus: MAKGVRLIITLECTECRSNPAKRSAGVSRYTTTKNRRNTTARLELNKFCPHCNKHTVHKEIK.

This sequence belongs to the bacterial ribosomal protein bL33 family.

This Cyanothece sp. (strain PCC 7425 / ATCC 29141) protein is Large ribosomal subunit protein bL33.